Consider the following 102-residue polypeptide: NADH-quinone oxidoreductase subunit K (102 aa).

Helical transmembrane passes span 5–25 (IAHY…GIFL), 31–51 (IIIL…FVAF), and 66–86 (FILT…VVFF).

This sequence belongs to the complex I subunit 4L family. In terms of assembly, NDH-1 is composed of 14 different subunits. Subunits NuoA, H, J, K, L, M, N constitute the membrane sector of the complex.

It localises to the cell inner membrane. It catalyses the reaction a quinone + NADH + 5 H(+)(in) = a quinol + NAD(+) + 4 H(+)(out). Functionally, NDH-1 shuttles electrons from NADH, via FMN and iron-sulfur (Fe-S) centers, to quinones in the respiratory chain. The immediate electron acceptor for the enzyme in this species is believed to be ubiquinone. Couples the redox reaction to proton translocation (for every two electrons transferred, four hydrogen ions are translocated across the cytoplasmic membrane), and thus conserves the redox energy in a proton gradient. The chain is NADH-quinone oxidoreductase subunit K from Bartonella bacilliformis (strain ATCC 35685 / KC583 / Herrer 020/F12,63).